A 167-amino-acid polypeptide reads, in one-letter code: Lipoprotein signal peptidase (167 aa).

3 consecutive transmembrane segments (helical) span residues leucine 10 to valine 30, tryptophan 68 to leucine 88, and serine 98 to leucine 118. Residues aspartate 124 and aspartate 142 contribute to the active site. A helical membrane pass occupies residues phenylalanine 138–phenylalanine 158.

This sequence belongs to the peptidase A8 family.

Its subcellular location is the cell inner membrane. It carries out the reaction Release of signal peptides from bacterial membrane prolipoproteins. Hydrolyzes -Xaa-Yaa-Zaa-|-(S,diacylglyceryl)Cys-, in which Xaa is hydrophobic (preferably Leu), and Yaa (Ala or Ser) and Zaa (Gly or Ala) have small, neutral side chains.. It functions in the pathway protein modification; lipoprotein biosynthesis (signal peptide cleavage). This protein specifically catalyzes the removal of signal peptides from prolipoproteins. This chain is Lipoprotein signal peptidase, found in Xylella fastidiosa (strain 9a5c).